We begin with the raw amino-acid sequence, 192 residues long: Pyridoxal 5'-phosphate synthase subunit PdxT (192 aa).

Residue 50–52 (GES) participates in L-glutamine binding. C82 (nucleophile) is an active-site residue. L-glutamine is bound by residues R109 and 136–137 (IR). Active-site charge relay system residues include H172 and E174.

This sequence belongs to the glutaminase PdxT/SNO family. In terms of assembly, in the presence of PdxS, forms a dodecamer of heterodimers. Only shows activity in the heterodimer.

The enzyme catalyses aldehydo-D-ribose 5-phosphate + D-glyceraldehyde 3-phosphate + L-glutamine = pyridoxal 5'-phosphate + L-glutamate + phosphate + 3 H2O + H(+). It catalyses the reaction L-glutamine + H2O = L-glutamate + NH4(+). It participates in cofactor biosynthesis; pyridoxal 5'-phosphate biosynthesis. Functionally, catalyzes the hydrolysis of glutamine to glutamate and ammonia as part of the biosynthesis of pyridoxal 5'-phosphate. The resulting ammonia molecule is channeled to the active site of PdxS. The protein is Pyridoxal 5'-phosphate synthase subunit PdxT of Haemophilus influenzae (strain PittEE).